The primary structure comprises 574 residues: Ribonuclease Y (574 aa).

A helical membrane pass occupies residues 1–21 (MSLLDLVLLLLVLGLGGVLLL). One can recognise a KH domain in the interval 264–327 (AVTVVPIPSD…EIARMALEEL (64 aa)). Residues 390–483 (VLKHSIQVAH…VAAADALSAA (94 aa)) form the HD domain.

Belongs to the RNase Y family.

The protein resides in the cell membrane. Endoribonuclease that initiates mRNA decay. The protein is Ribonuclease Y of Thermus thermophilus (strain ATCC BAA-163 / DSM 7039 / HB27).